A 133-amino-acid polypeptide reads, in one-letter code: MITEDEVNKLLSENEALFRFMGAKFEKIERGVAKLSFEYKEELSRIGGMLHGAIIFAAMDYSGSYAVRTLDVKEAYTLEFNVIFLKAMKTPPFTFLARVVRETKRYAYVEVEGFDGNNELCAKGNGIWHLIRD.

It belongs to the thioesterase PaaI family.

In Sulfurisphaera tokodaii (strain DSM 16993 / JCM 10545 / NBRC 100140 / 7) (Sulfolobus tokodaii), this protein is Putative esterase STK_17900.